A 683-amino-acid polypeptide reads, in one-letter code: Synaptic vesicle glycoprotein 2B (683 aa).

Basic and acidic residues predominate over residues 1 to 10 (MDDYRYRDNY). Positions 1 to 73 (MDDYRYRDNY…TKMAPSRADG (73 aa)) are disordered. Over 1–110 (MDDYRYRDNY…ECGHGRFQWT (110 aa)) the chain is Cytoplasmic. Residue serine 33 is modified to Phosphoserine. A Phosphothreonine modification is found at threonine 36. Residues 111-131 (LFFVLGLALMADGVEIFVVSF) traverse the membrane as a helical segment. Over 132 to 148 (ALPSAEKDMCLSSSKKG) the chain is Extracellular. A helical transmembrane segment spans residues 149 to 169 (MLGLIVYLGMMAGAFILGGLA). Residues 170–182 (DKLGRKKVLSMSL) lie on the Cytoplasmic side of the membrane. Residues 183-203 (AINASFASLSSFVQGYGAFLF) traverse the membrane as a helical segment. Topologically, residues 204–205 (CR) are extracellular. The helical transmembrane segment at 206-226 (LISGIGIGGSLPIVFAYFSEF) threads the bilayer. The Cytoplasmic portion of the chain corresponds to 227–237 (LSREKRGEHLS). A helical transmembrane segment spans residues 238–258 (WLGIFWMTGGIYASAMAWSII). At 259-277 (PHYGWGFSMGTNYHFHSWR) the chain is on the extracellular side. A helical transmembrane segment spans residues 278–298 (VFVIVCALPATVSMVALKFMP). Residues 299 to 390 (ESPRFLLEMG…CVMGPYRMNT (92 aa)) are Cytoplasmic-facing. The chain crosses the membrane as a helical span at residues 391–411 (LILAVVWFTMALSYYGLTVWF). The Extracellular segment spans residues 412-535 (PDMIRYFQDE…CHMDFEEDND (124 aa)). Tyrosine 423 bears the Phosphotyrosine mark. 3 N-linked (GlcNAc...) asparagine glycosylation sites follow: asparagine 441, asparagine 491, and asparagine 516. A helical membrane pass occupies residues 536–556 (FLIYLVSFLGSLSVLPGNIIS). Residues 557 to 565 (ALLMDRIGR) are Cytoplasmic-facing. The chain crosses the membrane as a helical span at residues 566-586 (LKMIGGSMLISAVCCFFLFFG). The Extracellular segment spans residues 587–592 (NSESAM). The chain crosses the membrane as a helical span at residues 593-613 (IGWQCLFCGTSIAAWNALDVI). Residues 614-626 (TVELYPTNQRATA) lie on the Cytoplasmic side of the membrane. Residues 627–649 (FGILNGLCKFGAILGNTIFASFV) form a helical membrane-spanning segment. Residues 650–653 (GITK) lie on the Extracellular side of the membrane. A helical membrane pass occupies residues 654 to 672 (VVPILLAAASLVGGGLIAL). Over 673-683 (RLPETREQVLM) the chain is Cytoplasmic.

This sequence belongs to the major facilitator superfamily. Interacts with SYT1 in a calcium-independent manner. Forms a complex with SYT1, syntaxin-1 and SNAP25. As to quaternary structure, (Microbial infection) Interacts with C.botulinum neurotoxin type A (BoNT/A, botA). In terms of assembly, (Microbial infection) Interacts with C.botulinum neurotoxin type D (BoNT/D, botD). No evidence for its interaction with BoNT/D has also been published. In terms of processing, N-glycosylated. Post-translationally, the N-terminal cytoplasmic domain is phosphorylated by CK1. In terms of tissue distribution, expressed in ribbon synapses of the retina (at protein level). Expressed in diaphragm motor nerve terminals (at protein level). Expressed in hippocampus neurons (at protein level).

It is found in the cytoplasmic vesicle. Its subcellular location is the secretory vesicle. It localises to the synaptic vesicle membrane. The protein localises to the acrosome. Its function is as follows. Probably plays a role in the control of regulated secretion in neural and endocrine cells. (Microbial infection) Receptor for C.botulinum neurotoxin type A (BoNT/A, botA); the toxin probably binds via extracellular loop 4. Functionally, (Microbial infection) Possible receptor for C.botulinum neurotoxin type D (BoNT/D, botD). Not a receptor for C.botulinum neurotoxin type D (BoNT/D, botD). In terms of biological role, (Microbial infection) Receptor for C.botulinum neurotoxin type E (BoNT/E); the toxin probably binds via extracellular loop 4. It probably requires glycosylation of Asn-516. In Mus musculus (Mouse), this protein is Synaptic vesicle glycoprotein 2B (Sv2b).